We begin with the raw amino-acid sequence, 278 residues long: Undecaprenyl-diphosphatase 2 (278 aa).

Helical transmembrane passes span Met-1 to Ile-21, Phe-38 to Tyr-58, Phe-85 to Leu-105, Phe-118 to Val-138, Ser-191 to Leu-211, Pro-223 to Ile-243, and Leu-251 to His-271.

It belongs to the UppP family.

Its subcellular location is the cell membrane. The enzyme catalyses di-trans,octa-cis-undecaprenyl diphosphate + H2O = di-trans,octa-cis-undecaprenyl phosphate + phosphate + H(+). In terms of biological role, catalyzes the dephosphorylation of undecaprenyl diphosphate (UPP). Confers resistance to bacitracin. This is Undecaprenyl-diphosphatase 2 from Halalkalibacterium halodurans (strain ATCC BAA-125 / DSM 18197 / FERM 7344 / JCM 9153 / C-125) (Bacillus halodurans).